A 51-amino-acid polypeptide reads, in one-letter code: Ribosome biogenesis protein Nop10 (51 aa).

It belongs to the NOP10 family.

Its function is as follows. Involved in ribosome biogenesis; more specifically in 18S rRNA pseudouridylation and in cleavage of pre-rRNA. In Methanococcus maripaludis (strain C5 / ATCC BAA-1333), this protein is Ribosome biogenesis protein Nop10.